The primary structure comprises 357 residues: GDP-polyphosphate phosphotransferase (357 aa).

A disordered region spans residues 1–83 (MSEEPTVSPP…DSTSASLPAN (83 aa)). The segment covering 14–25 (QPAAQPAKPARP) has biased composition (low complexity). The segment covering 26-40 (AARRAPRKPATRRPR) has biased composition (basic residues).

This sequence belongs to the polyphosphate kinase 2 (PPK2) family. Class I subfamily. In terms of assembly, homotetramer. Also forms octamers. Requires Mg(2+) as cofactor. It depends on Mn(2+) as a cofactor.

It carries out the reaction [phosphate](n) + GTP = [phosphate](n+1) + GDP. The catalysed reaction is [phosphate](n) + ATP = [phosphate](n+1) + ADP. Functionally, uses inorganic polyphosphate (polyP) as a donor to convert GDP to GTP and ADP to ATP. Shows a preference for GDP. Can also catalyze the synthesis of polyP from GTP or ATP, but the rate of polyP utilization is 75-fold greater than the rate of polyP synthesis. The sequence is that of GDP-polyphosphate phosphotransferase from Pseudomonas aeruginosa (strain ATCC 15692 / DSM 22644 / CIP 104116 / JCM 14847 / LMG 12228 / 1C / PRS 101 / PAO1).